Here is a 1057-residue protein sequence, read N- to C-terminus: Diacylglycerol kinase iota (1057 aa).

The segment covering 15–59 (AARGPARAPAAAAAAAASPPGPCSGAACAPSAAAGAGAMNPSSSA) has biased composition (low complexity). Disordered regions lie at residues 15-74 (AARG…SSGS) and 334-358 (LKAS…MEQE). Basic residues predominate over residues 337–352 (SNRKKKRTSFKRKASK). A DAGKc domain is found at 372 to 507 (PLMKPLLVFV…DRWNLHVERN (136 aa)). 2 ANK repeats span residues 950-979 (DHCS…SELL) and 986-1015 (TGET…SLRK). Residues 1014–1024 (RKTDSKGKTPQ) are compositionally biased toward basic and acidic residues. Residues 1014–1033 (RKTDSKGKTPQERAQQAGDP) form a disordered region. Residues 1055-1057 (TAV) carry the PDZ-binding motif.

It belongs to the eukaryotic diacylglycerol kinase family. Interacts (via PDZ-binding motif) with DLG4; controls the localization of DGKI to the synapse. Interacts (via PDZ-binding motif) with DLG1. Interacts (via PDZ-binding motif) with DLG2. Interacts (via PDZ-binding motif) with DLG3. May interact with RASGRP3; involved in the regulation of RASGRP3 activity. In terms of tissue distribution, specifically expressed in brain and retina. In brain, highly expressed in hippocampus, caudate nucleus, occipital pole, cerebral cortex, and cerebellum. Also detected in kidney.

The protein localises to the cell projection. Its subcellular location is the axon. The protein resides in the dendrite. It is found in the presynapse. It localises to the postsynapse. The protein localises to the postsynaptic density. Its subcellular location is the synaptic cell membrane. The protein resides in the cytoplasmic vesicle. It is found in the secretory vesicle. It localises to the synaptic vesicle membrane. The protein localises to the cytoplasm. Its subcellular location is the cytosol. The protein resides in the nucleus. It carries out the reaction a 1,2-diacyl-sn-glycerol + ATP = a 1,2-diacyl-sn-glycero-3-phosphate + ADP + H(+). The catalysed reaction is 1,2-di-(9Z-octadecenoyl)-sn-glycerol + ATP = 1,2-di-(9Z-octadecenoyl)-sn-glycero-3-phosphate + ADP + H(+). The enzyme catalyses 1-octadecanoyl-2-(5Z,8Z,11Z,14Z-eicosatetraenoyl)-sn-glycerol + ATP = 1-octadecanoyl-2-(5Z,8Z,11Z,14Z-eicosatetraenoyl)-sn-glycero-3-phosphate + ADP + H(+). It catalyses the reaction 1-octadecanoyl-2-(9Z,12Z)-octadecadienoyl-sn-glycerol + ATP = 1-octadecanoyl-2-(9Z,12Z-octadecadienoyl)-sn-glycero-3-phosphate + ADP + H(+). It functions in the pathway lipid metabolism; glycerolipid metabolism. Diacylglycerol kinase that converts diacylglycerol/DAG into phosphatidic acid/phosphatidate/PA and regulates the respective levels of these two bioactive lipids. Thereby, acts as a central switch between the signaling pathways activated by these second messengers with different cellular targets and opposite effects in numerous biological processes. Has probably no preference for any of the diacylglycerols in terms of the acyl chain composition, especially for the acyl chain at the sn-2 position. By controlling the diacylglycerol/DAG-mediated activation of RASGRP3, negatively regulates the Rap1 signaling pathway. May play a role in presynaptic diacylglycerol/DAG signaling and control neurotransmitter release during metabotropic glutamate receptor-dependent long-term depression. The polypeptide is Diacylglycerol kinase iota (Homo sapiens (Human)).